The sequence spans 224 residues: Probable GTP-binding protein EngB (224 aa).

Residues Ile-31–Pro-205 enclose the EngB-type G domain. Residues Gly-39 to Ser-46, Gly-66 to Leu-70, Asp-84 to Gly-87, Thr-151 to Asp-154, and Leu-184 to Ser-186 contribute to the GTP site. 2 residues coordinate Mg(2+): Ser-46 and Thr-68.

It belongs to the TRAFAC class TrmE-Era-EngA-EngB-Septin-like GTPase superfamily. EngB GTPase family. It depends on Mg(2+) as a cofactor.

Its function is as follows. Necessary for normal cell division and for the maintenance of normal septation. This chain is Probable GTP-binding protein EngB, found in Shewanella frigidimarina (strain NCIMB 400).